The following is a 515-amino-acid chain: Tyrosine decarboxylase 1 (515 aa).

A run of 2 repeats spans residues Asp-81–Glu-138 and Val-141–Gln-192. Residues Asp-81–Gln-192 are 2 X approximate tandem repeats. Ala-105 is a binding site for substrate. Pyridoxal 5'-phosphate-binding residues include Thr-169 and Cys-170. Position 205 (His-205) interacts with substrate. 2 residues coordinate pyridoxal 5'-phosphate: Thr-264 and Asn-318. At Lys-321 the chain carries N6-(pyridoxal phosphate)lysine.

It belongs to the group II decarboxylase family. Requires pyridoxal 5'-phosphate as cofactor. In terms of tissue distribution, mostly expressed in bulbs, and, to a lower extent, in stems, roots, leaves and flowers.

The catalysed reaction is L-tyrosine + H(+) = tyramine + CO2. Its pathway is alkaloid biosynthesis. Functionally, catalyzes the decarboxylation of L-tyrosine to tyramine, which is converted to norbelladine, a precursor to all Amaryllidaceae alkaloids such as galanthamine, lycorine and haemanthamine, and including haemanthamine- and crinamine-type alkaloids, promising anticancer agents. This Narcissus pseudonarcissus (Daffodil) protein is Tyrosine decarboxylase 1.